The chain runs to 600 residues: QTTEILLCLSPVEVASLKEGINFFRNKSTGKDYILYKNKSRLRACKNMCKHQGGLFIKDIEDLAGRSVRCTKHNWKLDVSTMKYINPPESFCQDELVVEMDENNRLLLLELNPPNPWDLQPRSPEELAFGEVQITYLTHACMDLKLGDKRMVFDPWLIGPAFARGWWLLHEPPSDWLERLCQADLIYISHLHSDHLSYPTLKKLAGRRPDIPIYVGNTERPVFWNLNQSGVQLTNINVVPFGIWQQVDKNLRFMILMDGVHPEMDTCIIVEYKGHKILNTVDCTRPNGGRLPMKVALMMSDFAGGASGFPMTFSGGKFTEEWKAQFIKTERKKLLNYKARLVKNLQPRIYCPFAGYFVESHPSDKYIKETNTKNDPNELNNLIKKNSDVITWTPRPGATLDLGRMLKDPTDSKGIIEPPEGTKIYKDSWDFEPYLEILNAAVGDEIFLHSSWIKEYFTWAGFKDYNLVVRMIETDEDFNPFPGGYDYLVDFLDLSFPKERPQREHPYEEIHSRVDVIRHVVKNGLLWDELYIGFQTRLQRDPDIYHHLFWNHFQIKLPLTPPNWKSFLMCCEQNGPGILQFSTERTNEPNRNKFSVENKA.

The Rieske domain occupies 9 to 107 (LSPVEVASLK…VEMDENNRLL (99 aa)). Positions 49, 51, 70, and 73 each coordinate [2Fe-2S] cluster.

This sequence belongs to the CMP-Neu5Ac hydroxylase family. [2Fe-2S] cluster serves as cofactor.

It localises to the cytoplasm. It carries out the reaction CMP-N-acetyl-beta-neuraminate + 2 Fe(II)-[cytochrome b5] + O2 + 2 H(+) = CMP-N-glycoloyl-beta-neuraminate + 2 Fe(III)-[cytochrome b5] + H2O. The protein operates within amino-sugar metabolism; N-acetylneuraminate metabolism. Sialic acids are components of carbohydrate chains of glycoconjugates and are involved in cell-cell recognition and cell-pathogen interactions. Catalyzes the conversion of CMP-N-acetylneuraminic acid (CMP-Neu5Ac) into its hydroxylated derivative CMP-N-glycolylneuraminic acid (CMP-Neu5Gc), a sialic acid abundantly expressed at the surface of many cells. The polypeptide is Cytidine monophosphate-N-acetylneuraminic acid hydroxylase (CMAH) (Pan paniscus (Pygmy chimpanzee)).